The following is a 515-amino-acid chain: Putative ribose/galactose/methyl galactoside import ATP-binding protein (515 aa).

ABC transporter domains lie at 26–262 and 272–511; these read LEVA…VGRE and VALG…KIMD. 58–65 is a binding site for ATP; sequence GENGAGKS.

The protein belongs to the ABC transporter superfamily. Carbohydrate importer 2 (CUT2) (TC 3.A.1.2) family.

It localises to the cell inner membrane. It carries out the reaction D-ribose(out) + ATP + H2O = D-ribose(in) + ADP + phosphate + H(+). The catalysed reaction is D-galactose(out) + ATP + H2O = D-galactose(in) + ADP + phosphate + H(+). Its function is as follows. Part of an ABC transporter complex involved in carbohydrate import. Could be involved in ribose, galactose and/or methyl galactoside import. Responsible for energy coupling to the transport system. The protein is Putative ribose/galactose/methyl galactoside import ATP-binding protein of Hahella chejuensis (strain KCTC 2396).